The primary structure comprises 91 residues: DNA-binding protein HU (91 aa).

The protein belongs to the bacterial histone-like protein family.

In terms of biological role, histone-like DNA-binding protein which is capable of wrapping DNA to stabilize it, and thus to prevent its denaturation under extreme environmental conditions. Also seems to act as a fortuitous virulence factor in delayed sequelae by binding to heparan sulfate-proteoglycans in the extracellular matrix of target organs and acting as a nidus for in situ immune complex formation. The chain is DNA-binding protein HU (hup) from Streptococcus pyogenes serotype M1.